Consider the following 216-residue polypeptide: MOB kinase activator-like 1 homolog C (216 aa).

Positions 78, 83, 160, and 165 each coordinate Zn(2+).

The protein belongs to the MOB1/phocein family.

The polypeptide is MOB kinase activator-like 1 homolog C (mobC) (Dictyostelium discoideum (Social amoeba)).